We begin with the raw amino-acid sequence, 415 residues long: Probable G-protein coupled receptor 19 (415 aa).

At 1–69 the chain is on the extracellular side; that stretch reads MGFDHRMETD…LNPGEVATAS (69 aa). N-linked (GlcNAc...) asparagine glycosylation is found at Asn-25 and Asn-52. Residues 70 to 90 form a helical membrane-spanning segment; it reads IFFGALWLFSIFGNSLVCLVI. The Cytoplasmic segment spans residues 91–102; that stretch reads HRSRRTQSTTNY. The chain crosses the membrane as a helical span at residues 103 to 123; that stretch reads FVVSMACADLLISVASTPFVV. Over 124–152 the chain is Extracellular; that stretch reads LQFTTGRWTLGSAMCKVVRYFQYLTPGVQ. Cys-138 and Cys-210 are oxidised to a cystine. A helical membrane pass occupies residues 153–173; the sequence is IYVLLSICIDRFYTIVYPLSF. Topologically, residues 174 to 182 are cytoplasmic; it reads KVSREKAKR. Residues 183-203 form a helical membrane-spanning segment; sequence MIAASWILDAAFVTPVFFFYG. The Extracellular segment spans residues 204-221; it reads SNWDSHCNYFLPPSWEGT. A helical transmembrane segment spans residues 222-242; that stretch reads AYTVIHFLVGFVIPSVLIILF. At 243–277 the chain is on the cytoplasmic side; sequence YQKVIKYIWRIGTDGRTLRRTMNIVPRTKVKTVKM. The helical transmembrane segment at 278-298 threads the bilayer; that stretch reads FLLLNLVFLFSWLPFHVAQLW. Over 299-309 the chain is Extracellular; that stretch reads HPHEQDYRKSS. Residues 310 to 332 traverse the membrane as a helical segment; that stretch reads LVFTAVTWVSFSSSASKPTLYSI. The Cytoplasmic portion of the chain corresponds to 333–415; it reads YNANFRRGMK…INSNPPNTFV (83 aa).

The protein belongs to the G-protein coupled receptor 1 family. In terms of tissue distribution, abundant expression in the brain.

It is found in the cell membrane. G-protein coupled receptor that plays a role in the regulation of circadian rhythms and energy metabolism. Participates in maintaining proper circadian gene expression in the suprachiasmatic nucleus (SCN), the locus of the master circadian clock in the brain. May function as a coordinator of aging-associated metabolic dysfunction, stress response, DNA integrity management, and eventual senescence. Upon binding to adropin, modulates mitochondrial energy metabolism via the p44/42-PDK4 signaling pathway, influencing pyruvate dehydrogenase activity. This is Probable G-protein coupled receptor 19 (Gpr19) from Rattus norvegicus (Rat).